The sequence spans 321 residues: Putrescine export system permease protein SapB (321 aa).

The Cytoplasmic segment spans residues 1 to 8 (MIIFTLRR). The helical transmembrane segment at 9–29 (ILLLIVTLFLLTFVGFSLSYF) threads the bilayer. The Periplasmic segment spans residues 30–80 (TPHAPLQGASLWNAWVFWFNGLIHWDFGVSSINGQPIAEQLKEVFPATMEL). In terms of domain architecture, ABC transmembrane type-1 spans 74–302 (FPATMELCIL…SLVIIVNVIS (229 aa)). Residues 81–101 (CILAFGFALIVGIPVGMIAGI) form a helical membrane-spanning segment. Residues 102-112 (TRHKWQDNLIN) are Cytoplasmic-facing. The helical transmembrane segment at 113 to 133 (AIALLGFSIPVFWLALLLTLF) threads the bilayer. At 134 to 174 (CSLTLGWLPVSGRFDLLYEVKPITGFALIDAWLSDSPWRDE) the chain is on the periplasmic side. The helical transmembrane segment at 175–195 (MIMSAIRHMILPVITLSVAPT) threads the bilayer. Topologically, residues 196-248 (TEVIRLMRISTIEVYDQNYVKAAATRGLSRFTILRRHVLHNALPPVIPRLGLQ) are cytoplasmic. A helical membrane pass occupies residues 249 to 269 (FSTMLTLAMITEMVFSWPGLG). At 270 to 280 (RWLINAIRQQD) the chain is on the periplasmic side. A helical transmembrane segment spans residues 281–301 (YAAISAGVMVCGSLVIIVNVI). At 302-321 (SDILGAMANPLKHKEWYALR) the chain is on the cytoplasmic side.

The protein belongs to the binding-protein-dependent transport system permease family. OppBC subfamily.

The protein resides in the cell inner membrane. Its function is as follows. Part of a putrescine export transport system, does not play a role in resistance to antimicrobial peptides. This chain is Putrescine export system permease protein SapB (sapB), found in Escherichia coli (strain K12).